We begin with the raw amino-acid sequence, 356 residues long: Dihydroorotate dehydrogenase (quinone) (356 aa).

FMN-binding positions include Ala-66–Lys-70 and Thr-90. Residue Lys-70 coordinates substrate. Asn-115 to Phe-119 is a substrate binding site. FMN contacts are provided by Asn-143 and Asn-176. Asn-176 serves as a coordination point for substrate. Ser-179 (nucleophile) is an active-site residue. Asn-181 provides a ligand contact to substrate. Lys-212 and Thr-240 together coordinate FMN. Asn-241–Thr-242 contacts substrate. FMN is bound by residues Gly-266, Gly-295, and Tyr-316–Thr-317.

It belongs to the dihydroorotate dehydrogenase family. Type 2 subfamily. Monomer. FMN is required as a cofactor.

It localises to the cell membrane. The catalysed reaction is (S)-dihydroorotate + a quinone = orotate + a quinol. The protein operates within pyrimidine metabolism; UMP biosynthesis via de novo pathway; orotate from (S)-dihydroorotate (quinone route): step 1/1. Its function is as follows. Catalyzes the conversion of dihydroorotate to orotate with quinone as electron acceptor. In Rhodococcus erythropolis (strain PR4 / NBRC 100887), this protein is Dihydroorotate dehydrogenase (quinone).